Here is a 315-residue protein sequence, read N- to C-terminus: FGFR1 oncogene partner 2 homolog (315 aa).

2 coiled-coil regions span residues 32 to 99 (EEAE…RAME) and 156 to 183 (VVQRELQTISQLRLENETLRELLQISKQ). 2 disordered regions span residues 201-222 (KAVQTDSTADDSADDLSISGAS) and 238-315 (PEQP…APAT). Positions 246-269 (GTTNSFNTAPVHSQSETQAPSVTL) are enriched in polar residues.

Belongs to the SIKE family.

This is FGFR1 oncogene partner 2 homolog from Drosophila melanogaster (Fruit fly).